The chain runs to 263 residues: 4-hydroxy-2-oxo-heptane-1,7-dioate aldolase (263 aa).

The active-site Proton acceptor is the His-45. Gln-147 is a binding site for substrate. Residue Glu-149 coordinates a divalent metal cation. Ala-174 and Asp-175 together coordinate substrate. Asp-175 is a binding site for a divalent metal cation.

This sequence belongs to the HpcH/HpaI aldolase family. Homohexamer; trimer of dimers. Requires a divalent metal cation as cofactor.

The enzyme catalyses 4-hydroxy-2-oxoheptanedioate = succinate semialdehyde + pyruvate. It participates in aromatic compound metabolism; 4-hydroxyphenylacetate degradation; pyruvate and succinate semialdehyde from 4-hydroxyphenylacetate: step 7/7. Functionally, catalyzes the reversible retro-aldol cleavage of 4-hydroxy-2-ketoheptane-1,7-dioate (HKHD) to pyruvate and succinic semialdehyde. The polypeptide is 4-hydroxy-2-oxo-heptane-1,7-dioate aldolase (Salmonella typhimurium (strain LT2 / SGSC1412 / ATCC 700720)).